The chain runs to 575 residues: Dihydroxy-acid dehydratase (575 aa).

The interval 1–25 (MPTTDSARAADIKQPDIKPRSRDVT) is disordered. Residues 8 to 25 (RAADIKQPDIKPRSRDVT) are compositionally biased toward basic and acidic residues. Cys-64 is a binding site for [2Fe-2S] cluster. Asp-96 provides a ligand contact to Mg(2+). Cys-137 contributes to the [2Fe-2S] cluster binding site. Residues Asp-138 and Lys-139 each coordinate Mg(2+). At Lys-139 the chain carries N6-carboxylysine. Residue Cys-214 coordinates [2Fe-2S] cluster. Glu-465 lines the Mg(2+) pocket. The active-site Proton acceptor is Ser-491.

Belongs to the IlvD/Edd family. Homodimer. Requires [2Fe-2S] cluster as cofactor. Mg(2+) serves as cofactor.

The enzyme catalyses (2R)-2,3-dihydroxy-3-methylbutanoate = 3-methyl-2-oxobutanoate + H2O. It catalyses the reaction (2R,3R)-2,3-dihydroxy-3-methylpentanoate = (S)-3-methyl-2-oxopentanoate + H2O. It functions in the pathway amino-acid biosynthesis; L-isoleucine biosynthesis; L-isoleucine from 2-oxobutanoate: step 3/4. The protein operates within amino-acid biosynthesis; L-valine biosynthesis; L-valine from pyruvate: step 3/4. In terms of biological role, functions in the biosynthesis of branched-chain amino acids. Catalyzes the dehydration of (2R,3R)-2,3-dihydroxy-3-methylpentanoate (2,3-dihydroxy-3-methylvalerate) into 2-oxo-3-methylpentanoate (2-oxo-3-methylvalerate) and of (2R)-2,3-dihydroxy-3-methylbutanoate (2,3-dihydroxyisovalerate) into 2-oxo-3-methylbutanoate (2-oxoisovalerate), the penultimate precursor to L-isoleucine and L-valine, respectively. The sequence is that of Dihydroxy-acid dehydratase from Mycobacterium avium (strain 104).